Reading from the N-terminus, the 161-residue chain is Peroxynitrite isomerase (161 aa).

Positions 17–23 (GSWVGRG) match the GXWXGXG motif. Histidine 152 lines the heme b pocket.

The protein belongs to the nitrobindin family. Homodimer. Heme b is required as a cofactor.

The catalysed reaction is peroxynitrite = nitrate. It participates in nitrogen metabolism. Heme-binding protein able to scavenge peroxynitrite and to protect free L-tyrosine against peroxynitrite-mediated nitration, by acting as a peroxynitrite isomerase that converts peroxynitrite to nitrate. Therefore, this protein likely plays a role in peroxynitrite sensing and in the detoxification of reactive nitrogen and oxygen species (RNS and ROS, respectively). Is able to bind nitric oxide (NO) in vitro, but may act as a sensor of peroxynitrite levels in vivo. The polypeptide is Peroxynitrite isomerase (Mycobacterium leprae (strain TN)).